A 261-amino-acid polypeptide reads, in one-letter code: MPYTSAFLEVIPAIDLLQGRAVRLYQGDYAQAEQVADDPIQQAEAWAAQGAPRLHVVDLDGAKSGDPVNLPIIERIVRSLAIPVQVGGGIRSLERARQLLDLGVDRVIVGTLAVEDPDTLEAMTQAFPGRVWVGIDARQGQVATRGWLSTTPLRAPELVQRVQAQGAAGIIYTDISRDGTLAGPNLEQLRQILAVSQVPVIASGGIGSLTDLLALLSLPRLTGAILGKALYSGAISLQEALRAVGPGRWQDLPPETGSLWA.

The active-site Proton acceptor is the aspartate 15. Aspartate 136 functions as the Proton donor in the catalytic mechanism.

Belongs to the HisA/HisF family.

It localises to the cytoplasm. The catalysed reaction is 1-(5-phospho-beta-D-ribosyl)-5-[(5-phospho-beta-D-ribosylamino)methylideneamino]imidazole-4-carboxamide = 5-[(5-phospho-1-deoxy-D-ribulos-1-ylimino)methylamino]-1-(5-phospho-beta-D-ribosyl)imidazole-4-carboxamide. The protein operates within amino-acid biosynthesis; L-histidine biosynthesis; L-histidine from 5-phospho-alpha-D-ribose 1-diphosphate: step 4/9. The polypeptide is 1-(5-phosphoribosyl)-5-[(5-phosphoribosylamino)methylideneamino] imidazole-4-carboxamide isomerase (Synechococcus sp. (strain JA-2-3B'a(2-13)) (Cyanobacteria bacterium Yellowstone B-Prime)).